Consider the following 195-residue polypeptide: MLVPTVIEQTARGERAYDIYSRLLKDRIIMLSGEINDQMANSIIAQLLFLDAQDNTKDISLYINSPGGVITSGLAIMDTMNFIKSDVSTIAIGMAASMASILLTSGTKGKRFALPNSTVLIHQPLGGAQGQQTDIQIAANEILKSRKKINEILHETTGQPLEKIQKDTERDNYLTAEEAKEYGLIDEIMVNKKSN.

Ser97 functions as the Nucleophile in the catalytic mechanism. His122 is a catalytic residue.

The protein belongs to the peptidase S14 family. In terms of assembly, fourteen ClpP subunits assemble into 2 heptameric rings which stack back to back to give a disk-like structure with a central cavity, resembling the structure of eukaryotic proteasomes.

Its subcellular location is the cytoplasm. The enzyme catalyses Hydrolysis of proteins to small peptides in the presence of ATP and magnesium. alpha-casein is the usual test substrate. In the absence of ATP, only oligopeptides shorter than five residues are hydrolyzed (such as succinyl-Leu-Tyr-|-NHMec, and Leu-Tyr-Leu-|-Tyr-Trp, in which cleavage of the -Tyr-|-Leu- and -Tyr-|-Trp bonds also occurs).. Its function is as follows. Cleaves peptides in various proteins in a process that requires ATP hydrolysis. Has a chymotrypsin-like activity. Plays a major role in the degradation of misfolded proteins. This Lactobacillus acidophilus (strain ATCC 700396 / NCK56 / N2 / NCFM) protein is ATP-dependent Clp protease proteolytic subunit.